The following is a 241-amino-acid chain: GTP cyclohydrolase 1 (241 aa).

Residues 1-11 (MEKPRGVRCTN) constitute a propeptide that is removed on maturation. Residues 1–58 (MEKPRGVRCTNGFPERELPRPGASRPAEKSRPPEAKGAQPADAWKAGRPRSEEDNELN) form a disordered region. Phosphoserine is present on residues S51 and S72. 3 residues coordinate Zn(2+): C132, H135, and C203.

This sequence belongs to the GTP cyclohydrolase I family. In terms of assembly, toroid-shaped homodecamer, composed of two pentamers of five dimers. Interacts with AHSA1 and GCHFR/GFRP. In terms of processing, phosphorylated.

The protein localises to the cytoplasm. It is found in the nucleus. It catalyses the reaction GTP + H2O = 7,8-dihydroneopterin 3'-triphosphate + formate + H(+). It participates in cofactor biosynthesis; 7,8-dihydroneopterin triphosphate biosynthesis; 7,8-dihydroneopterin triphosphate from GTP: step 1/1. GTP shows a positive allosteric effect, and tetrahydrobiopterin inhibits the enzyme activity. Zinc is required for catalytic activity. Inhibited by Mg(2+). In terms of biological role, may positively regulate nitric oxide synthesis in endothelial cells. May be involved in dopamine synthesis. May modify pain sensitivity and persistence. In Rattus norvegicus (Rat), this protein is GTP cyclohydrolase 1 (Gch1).